The chain runs to 121 residues: Regulator of ribonuclease activity B (121 aa).

This sequence belongs to the RraB family. As to quaternary structure, interacts with the C-terminal region of Rne.

The protein localises to the cytoplasm. In terms of biological role, globally modulates RNA abundance by binding to RNase E (Rne) and regulating its endonucleolytic activity. Can modulate Rne action in a substrate-dependent manner by altering the composition of the degradosome. This Psychromonas ingrahamii (strain DSM 17664 / CCUG 51855 / 37) protein is Regulator of ribonuclease activity B.